Here is a 218-residue protein sequence, read N- to C-terminus: MTDGDYDYLIKLLALGDSGVGKTTFLYRYTDNKFNPKFITTVGIDFREKRVVYNAQGPNGSSGKAFKVHLQLWDTAGQERFRSLTTAFFRDAMGFLLMFDLTSQQSFLNVRNWMSQLQANAYCENPDIVLIGNKADLPDQREVNERQARELADKYGIPYFETSAATGQNVEKAVETLLDLIMKRMEQCVEKTQIPDTVNGGNSGNLDGEKPPEKKCIC.

Threonine 2 carries the post-translational modification N-acetylthreonine. 16–24 (GDSGVGKTT) serves as a coordination point for GTP. Residues 38-46 (FITTVGIDF) carry the Effector region motif. GTP contacts are provided by residues 74–78 (DTAGQ), 133–136 (NKAD), and 163–165 (SAA). Residues cysteine 123 and cysteine 188 are joined by a disulfide bond. Residues 194–218 (IPDTVNGGNSGNLDGEKPPEKKCIC) form a disordered region. Residues 207 to 218 (DGEKPPEKKCIC) show a composition bias toward basic and acidic residues. Residues cysteine 216 and cysteine 218 are each lipidated (S-geranylgeranyl cysteine). A Cysteine methyl ester modification is found at cysteine 218.

The protein belongs to the small GTPase superfamily. Rab family. As to quaternary structure, interacts with SYTL2, SYTL4, MYRIP and MLPH. Interacts with RPH3A and RPH3A. Interacts (GDP-bound form preferentially) with DENND10. Expressed primarily in testis.

Its subcellular location is the membrane. The protein resides in the late endosome. The enzyme catalyses GTP + H2O = GDP + phosphate + H(+). Regulated by guanine nucleotide exchange factors (GEFs) which promote the exchange of bound GDP for free GTP, GTPase activating proteins (GAPs) which increase the GTP hydrolysis activity, and GDP dissociation inhibitors which inhibit the dissociation of the nucleotide from the GTPase. Activated by GEFs such as DENND10. Its function is as follows. Small GTPase which cycles between active GTP-bound and inactive GDP-bound states. In its active state, binds to a variety of effector proteins to regulate homeostasis of late endocytic pathway, including endosomal positioning, maturation and secretion. Plays a role in NTRK2/TRKB axonal anterograde transport by facilitating the association of NTRK2/TRKB with KLC1. May be involved in targeting uroplakins to urothelial apical membranes. The protein is Ras-related protein Rab-27B (RAB27B) of Homo sapiens (Human).